Reading from the N-terminus, the 189-residue chain is MEIDKELAPQDRTVTVATVLPTVPGPSPFTIKQPFQSEVLFAGTKDAEASLTIANIDSVSTLTTFYRHASLESLWVTIHPTLQAPAFPTTVGVCWVPANSPVTPTQITKTYGGQIFCIGGAINTLSPLIVKCPLEMMNPRVKDSIQYLDSPKLLISITAQPTAPPASTCIITVSGTLSMHSPLITDTST.

This sequence belongs to the tymoviruses capsid protein family.

It is found in the virion. Functionally, self-assembles to form a T=3 icosahedral capsid composed of 180 copies of the capsid protein. The capsid encapsulates the single-stranded RNA genome. A pentameric unit may be lost during decapsidation. The sequence is that of Capsid protein from Brassica.